The following is a 338-amino-acid chain: 3-phosphoshikimate 1-carboxyvinyltransferase 2 (338 aa).

Arg25 is a binding site for phosphoenolpyruvate. Residues Ser72, Ser73, Gln74, Ser100, Asp225, and Lys252 each contribute to the 3-phosphoshikimate site. Residue Gln74 coordinates phosphoenolpyruvate. Asp225 (proton acceptor) is an active-site residue. Phosphoenolpyruvate is bound by residues Arg256, Arg298, and Lys323.

It belongs to the EPSP synthase family.

The protein resides in the plastid. It is found in the chloroplast. The catalysed reaction is 3-phosphoshikimate + phosphoenolpyruvate = 5-O-(1-carboxyvinyl)-3-phosphoshikimate + phosphate. It functions in the pathway metabolic intermediate biosynthesis; chorismate biosynthesis; chorismate from D-erythrose 4-phosphate and phosphoenolpyruvate: step 6/7. Functionally, catalyzes the transfer of the enolpyruvyl moiety of phosphoenolpyruvate (PEP) to the 5-hydroxyl of shikimate-3-phosphate (S3P) to produce enolpyruvyl shikimate-3-phosphate and inorganic phosphate. This Nicotiana tabacum (Common tobacco) protein is 3-phosphoshikimate 1-carboxyvinyltransferase 2 (EPSPS-2).